We begin with the raw amino-acid sequence, 232 residues long: Large ribosomal subunit protein uL1 (232 aa).

It belongs to the universal ribosomal protein uL1 family. In terms of assembly, part of the 50S ribosomal subunit.

Functionally, binds directly to 23S rRNA. The L1 stalk is quite mobile in the ribosome, and is involved in E site tRNA release. Protein L1 is also a translational repressor protein, it controls the translation of the L11 operon by binding to its mRNA. The polypeptide is Large ribosomal subunit protein uL1 (Bacteroides fragilis (strain ATCC 25285 / DSM 2151 / CCUG 4856 / JCM 11019 / LMG 10263 / NCTC 9343 / Onslow / VPI 2553 / EN-2)).